Here is a 147-residue protein sequence, read N- to C-terminus: Ubiquitin-conjugating enzyme E2-16 kDa (147 aa).

Positions 1–147 (MAFKRINKEL…AREWTRKYAI (147 aa)) constitute a UBC core domain. Cys107 serves as the catalytic Glycyl thioester intermediate.

It belongs to the ubiquitin-conjugating enzyme family.

It catalyses the reaction S-ubiquitinyl-[E1 ubiquitin-activating enzyme]-L-cysteine + [E2 ubiquitin-conjugating enzyme]-L-cysteine = [E1 ubiquitin-activating enzyme]-L-cysteine + S-ubiquitinyl-[E2 ubiquitin-conjugating enzyme]-L-cysteine.. The protein operates within protein modification; protein ubiquitination. In terms of biological role, catalyzes the covalent attachment of ubiquitin to other proteins. May also mediate selective proteolysis pathways. The sequence is that of Ubiquitin-conjugating enzyme E2-16 kDa (UBC1) from Colletotrichum gloeosporioides (Anthracnose fungus).